We begin with the raw amino-acid sequence, 438 residues long: Hydrogenobyrinate a,c-diamide synthase (438 aa).

One can recognise a GATase cobBQ-type domain in the interval 247-438 (RIALAEDAAF…TFFHAIAKGG (192 aa)). The Nucleophile role is filled by C329.

The protein belongs to the CobB/CbiA family. It depends on Mg(2+) as a cofactor.

It catalyses the reaction hydrogenobyrinate + 2 L-glutamine + 2 ATP + 2 H2O = hydrogenobyrinate a,c-diamide + 2 L-glutamate + 2 ADP + 2 phosphate + 2 H(+). The protein operates within cofactor biosynthesis; adenosylcobalamin biosynthesis; cob(II)yrinate a,c-diamide from precorrin-2 (aerobic route): step 9/10. Functionally, catalyzes the ATP-dependent amidation of the two carboxylate groups at positions a and c of hydrogenobyrinate, using either L-glutamine or ammonia as the nitrogen source. This Agrobacterium fabrum (strain C58 / ATCC 33970) (Agrobacterium tumefaciens (strain C58)) protein is Hydrogenobyrinate a,c-diamide synthase.